Here is a 139-residue protein sequence, read N- to C-terminus: Putative nickel-responsive regulator (139 aa).

4 residues coordinate Ni(2+): H79, H90, H92, and C98.

Belongs to the transcriptional regulatory CopG/NikR family. Requires Ni(2+) as cofactor.

Functionally, transcriptional regulator. The sequence is that of Putative nickel-responsive regulator from Geotalea uraniireducens (strain Rf4) (Geobacter uraniireducens).